Here is a 248-residue protein sequence, read N- to C-terminus: Probable transcriptional regulatory protein OCAR_7305/OCA5_c08120 (248 aa).

This sequence belongs to the TACO1 family.

It localises to the cytoplasm. The polypeptide is Probable transcriptional regulatory protein OCAR_7305/OCA5_c08120 (Afipia carboxidovorans (strain ATCC 49405 / DSM 1227 / KCTC 32145 / OM5) (Oligotropha carboxidovorans)).